We begin with the raw amino-acid sequence, 179 residues long: Inorganic pyrophosphatase (179 aa).

Residues K30, R44, and Y56 each coordinate substrate. Mg(2+) contacts are provided by D66, D71, and D103. Substrate is bound at residue Y142.

The protein belongs to the PPase family. Homohexamer. The cofactor is Mg(2+).

It is found in the cytoplasm. The catalysed reaction is diphosphate + H2O = 2 phosphate + H(+). Catalyzes the hydrolysis of inorganic pyrophosphate (PPi) forming two phosphate ions. This Rhodospirillum rubrum (strain ATCC 11170 / ATH 1.1.1 / DSM 467 / LMG 4362 / NCIMB 8255 / S1) protein is Inorganic pyrophosphatase.